Consider the following 103-residue polypeptide: Large ribosomal subunit protein bL21 (103 aa).

It belongs to the bacterial ribosomal protein bL21 family. As to quaternary structure, part of the 50S ribosomal subunit. Contacts protein L20.

This protein binds to 23S rRNA in the presence of protein L20. This is Large ribosomal subunit protein bL21 from Saccharophagus degradans (strain 2-40 / ATCC 43961 / DSM 17024).